The primary structure comprises 756 residues: 1,4-alpha-glucan branching enzyme GlgB (756 aa).

Aspartate 431 functions as the Nucleophile in the catalytic mechanism. Catalysis depends on glutamate 484, which acts as the Proton donor.

The protein belongs to the glycosyl hydrolase 13 family. GlgB subfamily. In terms of assembly, monomer.

It catalyses the reaction Transfers a segment of a (1-&gt;4)-alpha-D-glucan chain to a primary hydroxy group in a similar glucan chain.. It participates in glycan biosynthesis; glycogen biosynthesis. In terms of biological role, catalyzes the formation of the alpha-1,6-glucosidic linkages in glycogen by scission of a 1,4-alpha-linked oligosaccharide from growing alpha-1,4-glucan chains and the subsequent attachment of the oligosaccharide to the alpha-1,6 position. This chain is 1,4-alpha-glucan branching enzyme GlgB, found in Prochlorococcus marinus (strain MIT 9303).